Consider the following 638-residue polypeptide: Probable ATP-binding protein YheS (638 aa).

2 consecutive ABC transporter domains span residues 2-246 (IIFS…AQQT) and 313-531 (VMIE…STSE). Residues 34–41 (GKNGCGKS) and 349–356 (GKNGAGKS) contribute to the ATP site. Residues 525–563 (EQNSTSENKVSEKVGDNENSVQNRKEQKRREAELRQQTA) are disordered. Residues 547-558 (NRKEQKRREAEL) show a composition bias toward basic and acidic residues.

This sequence belongs to the ABC transporter superfamily. ABCF family. YheS subfamily.

Genetic data indicate it may be involved in ribosome assembly or function. The protein is Probable ATP-binding protein YheS of Haemophilus influenzae (strain ATCC 51907 / DSM 11121 / KW20 / Rd).